The primary structure comprises 74 residues: MARPFFRRRKSCPFSGKNAPKIDYKDVRLLQGFMSERGKIVPSRITAVSAKKQRELSQAIKRARHIGLLPYIVK.

It belongs to the bacterial ribosomal protein bS18 family. Part of the 30S ribosomal subunit. Forms a tight heterodimer with protein bS6.

Functionally, binds as a heterodimer with protein bS6 to the central domain of the 16S rRNA, where it helps stabilize the platform of the 30S subunit. This is Small ribosomal subunit protein bS18 from Novosphingobium aromaticivorans (strain ATCC 700278 / DSM 12444 / CCUG 56034 / CIP 105152 / NBRC 16084 / F199).